Here is a 212-residue protein sequence, read N- to C-terminus: Transmembrane emp24 domain-containing protein p24delta7 (212 aa).

An N-terminal signal peptide occupies residues 1–22 (MNHRRSSIVLLILSILSPVTLS). Residues 23-179 (IRYELLSGHT…HNLNIATNSK (157 aa)) lie on the Lumenal side of the membrane. Positions 32-147 (TKCISEEIHA…VETMEFEVKK (116 aa)) constitute a GOLD domain. A coiled-coil region spans residues 162 to 175 (LRDREEEMHNLNIA). Omega-N-methylated arginine is present on Arg-165. The helical transmembrane segment at 180–200 (MAWLSFVSLAVCLSVAGLQFW) threads the bilayer. The Cytoplasmic segment spans residues 201 to 212 (HLKTFFQKKKLI). The COPII vesicle coat-binding motif lies at 205 to 206 (FF). The COPI vesicle coat-binding motif lies at 205-212 (FFQKKKLI).

It belongs to the EMP24/GP25L family. As to quaternary structure, probably oligomerizes with other members of the EMP24/GP25L family. Associates with the COPI vesicle coat (coatomer). Associates with the COPII vesicle coat (coatomer).

Its subcellular location is the endoplasmic reticulum membrane. The protein localises to the golgi apparatus. It is found in the cis-Golgi network membrane. It localises to the golgi stack membrane. Functionally, involved in vesicular protein trafficking. Mainly functions in the early secretory pathway. Thought to act as cargo receptor at the lumenal side for incorporation of secretory cargo molecules into transport vesicles and to be involved in vesicle coat formation at the cytoplasmic side. This is Transmembrane emp24 domain-containing protein p24delta7 from Arabidopsis thaliana (Mouse-ear cress).